Here is a 105-residue protein sequence, read N- to C-terminus: Integration host factor (105 aa).

The H2TH motif, binds DNA signature appears at 64-71; the sequence is LPKVGKVK. A lid, binds DNA region spans residues 82–94; the sequence is APTRRLRGLGDRQ.

Belongs to the actinobacterial IHF (aIHF) family. In terms of assembly, homodimer in solution. Binds DNA as a monomer.

The protein resides in the cytoplasm. In terms of biological role, a nucleoid-associated protein (NAP) required for septum formation and normal cell division as well as for DNA segregation. Binds about 135 sites across the chromosome, most of which are genes involved in virulence; most DNA-binding sites are immediately upstream of transcription start sites. When mIHF is depleted most of the genes are down-regulated. Binds supercoiled and linear dsDNA in a concentration-dependent manner, probably non-sequence specifically. Binding compacts DNA, protecting it from degradation. Initial binding to supercoiled DNA opens it fully, followed by bending and compaction. Bends and thus compacts linear DNA. Binds DNA via 2 sites, forms left-handed loops on linear DNA; at low concentrations unwinds larger cosmids (42.6 kb) then collapses and condenses DNA as protein levels rise. Forms mostly left-handed loops on condensing cosmid DNA. This Mycobacterium tuberculosis (strain ATCC 25618 / H37Rv) protein is Integration host factor.